The chain runs to 211 residues: Protein-L-isoaspartate O-methyltransferase 2 (211 aa).

The active site involves S60.

Belongs to the methyltransferase superfamily. L-isoaspartyl/D-aspartyl protein methyltransferase family.

The protein localises to the cytoplasm. It carries out the reaction [protein]-L-isoaspartate + S-adenosyl-L-methionine = [protein]-L-isoaspartate alpha-methyl ester + S-adenosyl-L-homocysteine. In terms of biological role, catalyzes the methyl esterification of L-isoaspartyl residues in peptides and proteins that result from spontaneous decomposition of normal L-aspartyl and L-asparaginyl residues. It plays a role in the repair and/or degradation of damaged proteins. This is Protein-L-isoaspartate O-methyltransferase 2 from Nitrosospira multiformis (strain ATCC 25196 / NCIMB 11849 / C 71).